Here is a 563-residue protein sequence, read N- to C-terminus: BOS complex subunit NCLN (563 aa).

An N-terminal signal peptide occupies residues 1–42 (MLEEAGEVLENMLKASCLPLGFIVFLPAVLLLVAPPLPAADA). The Lumenal segment spans residues 43–522 (AHEFTVYRMQ…VMNAYRVKPA (480 aa)). 2 N-linked (GlcNAc...) asparagine glycosylation sites follow: Asn241 and Asn428. The chain crosses the membrane as a helical span at residues 523–543 (IFDLLLAVCIGAYLGMAYTAV). The Cytoplasmic portion of the chain corresponds to 544 to 563 (QHFDLLYKTVQRLLVKAKTQ).

Belongs to the nicastrin family. In terms of assembly, component of the back of Sec61 (BOS) complex, composed of NCLN/Nicalin, NOMO1 and TMEM147. The BOS complex is part of the multi-pass translocon (MPT) complex, composed of three subcomplexes, the GEL complex (composed of RAB5IF/OPTI and TMCO1), the BOS complex (composed of NCLN/Nicalin, NOMO1 and TMEM147) and the PAT complex (composed of WDR83OS/Asterix and CCDC47). The MPT complex associates with the SEC61 complex.

Its subcellular location is the endoplasmic reticulum membrane. In terms of biological role, component of the multi-pass translocon (MPT) complex that mediates insertion of multi-pass membrane proteins into the lipid bilayer of membranes. The MPT complex takes over after the SEC61 complex: following membrane insertion of the first few transmembrane segments of proteins by the SEC61 complex, the MPT complex occludes the lateral gate of the SEC61 complex to promote insertion of subsequent transmembrane regions. May antagonize Nodal signaling and subsequent organization of axial structures during mesodermal patterning, via its interaction with NOMO. The polypeptide is BOS complex subunit NCLN (Canis lupus familiaris (Dog)).